A 73-amino-acid polypeptide reads, in one-letter code: Translation initiation factor IF-1 (73 aa).

Residues 1-73 form the S1-like domain; it reads MANKEELIEF…TKGRITYRAR (73 aa).

This sequence belongs to the IF-1 family. Component of the 30S ribosomal translation pre-initiation complex which assembles on the 30S ribosome in the order IF-2 and IF-3, IF-1 and N-formylmethionyl-tRNA(fMet); mRNA recruitment can occur at any time during PIC assembly.

The protein resides in the cytoplasm. One of the essential components for the initiation of protein synthesis. Stabilizes the binding of IF-2 and IF-3 on the 30S subunit to which N-formylmethionyl-tRNA(fMet) subsequently binds. Helps modulate mRNA selection, yielding the 30S pre-initiation complex (PIC). Upon addition of the 50S ribosomal subunit IF-1, IF-2 and IF-3 are released leaving the mature 70S translation initiation complex. This chain is Translation initiation factor IF-1, found in Acinetobacter baumannii (strain ATCC 17978 / DSM 105126 / CIP 53.77 / LMG 1025 / NCDC KC755 / 5377).